Consider the following 725-residue polypeptide: MGQGASTQTLNPNLAYITDDEVDHSMPESDGANPGAGNPSAKSKGKFPSLGKIFKPWKWRKKKTSDKFKETSEGLVLERKMSVRKPREELIERGLLKDIPENESNDVNHKAPPVKNGHTGPVPGDRKSDSGSEIDQDRRMDDTGERKEKRKRIGKRNDGTERMTEMIQSFQKMSLMQRSVGVQFVPEPKPASTSTKESQPPPKQAILPPKRVIAAPSSAEPAPVPPPPIAKPPPRTVSLNVDDSSRTILIPSLIAGDREVPPTVPAHTTPATVSTHKTLPTVPAHMTPPTVPAHVTTPAAPAHSNPPAVLLKQPPMPPPKPVHHSSNTALQGLDLSTVDPSQVPVPVKRSPPIPPKRNTPVTKRNSGDSSANLPEPPPPAPTSVPIPAAAPISAPPSTQSDPPSPTTEPPSQPPPLPLHIRIQRALNSPGPVHPNPEGSQRAHSLLFETPPDLINEALGGGRYSLPVTIEPLRLPEDDDFDMEEELQKLRAGPRPTQKPELEPRSRRGLVEDPQVAVIPEDAGSESSEEEEDESDSDQSIKYRDDNEEDDDEEDVPKSGLASRVKRKDTLALKLERQQEKEKSQEEDSSTWNNKEQWEAVRNKIGTALTRRLSQRPTAQELEQRNILLAKNEEVRRAERSEIKRRLTRKLSQRPTIADLQARKILRFHEYVESTHAQDYDRRADKPWTKLTPADKAAIRKELNEFKSSEMEVHEESRIFTRFHRP.

Polar residues predominate over residues 1–12 (MGQGASTQTLNP). Residues 1–597 (MGQGASTQTL…SSTWNNKEQW (597 aa)) are disordered. Residues 55–64 (KPWKWRKKKT) show a composition bias toward basic residues. Basic and acidic residues-rich tracts occupy residues 65 to 100 (SDKFKETSEGLVLERKMSVRKPREELIERGLLKDIP), 124 to 147 (GDRKSDSGSEIDQDRRMDDTGERK), and 155 to 164 (KRNDGTERMT). The RPEL 1 repeat unit spans residues 75–100 (LVLERKMSVRKPREELIERGLLKDIP). Polar residues predominate over residues 166–177 (MIQSFQKMSLMQ). The span at 212–221 (VIAAPSSAEP) shows a compositional bias: low complexity. A compositionally biased stretch (pro residues) spans 222–235 (APVPPPPIAKPPPR). 2 stretches are compositionally biased toward low complexity: residues 265-276 (PAHTTPATVSTH) and 292-313 (PAHVTTPAAPAHSNPPAVLLKQ). The span at 359–368 (TPVTKRNSGD) shows a compositional bias: polar residues. Positions 374 to 384 (PEPPPPAPTSV) are enriched in pro residues. Positions 385 to 401 (PIPAAAPISAPPSTQSD) are enriched in low complexity. The segment covering 402-417 (PPSPTTEPPSQPPPLP) has biased composition (pro residues). The segment covering 497 to 510 (QKPELEPRSRRGLV) has biased composition (basic and acidic residues). 2 stretches are compositionally biased toward acidic residues: residues 522–536 (AGSESSEEEEDESDS) and 545–554 (DNEEDDDEED). The span at 567–585 (KDTLALKLERQQEKEKSQE) shows a compositional bias: basic and acidic residues. 2 RPEL repeats span residues 606-631 (TALTRRLSQRPTAQELEQRNILLAKN) and 644-669 (RRLTRKLSQRPTIADLQARKILRFHE).

The protein belongs to the phosphatase and actin regulator family. Binds ppp1ca and actin.

It localises to the cytoplasm. It is found in the cell projection. Its subcellular location is the lamellipodium. In terms of biological role, regulator of protein phosphatase 1 (PP1) required for neural tube and optic fissure closure, and enteric neural crest cell (ENCCs) migration during development. Acts as an activator of PP1. During neural tube closure, localizes to the ventral neural tube and activates PP1, leading to down-regulate cell proliferation within cranial neural tissue and the neural retina. Also acts as a regulator of migration of enteric neural crest cells (ENCCs) by activating PP1, leading to repression of the integrin signaling through the rho/rock pathway. The chain is Phosphatase and actin regulator 4A (phactr4a) from Danio rerio (Zebrafish).